A 199-amino-acid polypeptide reads, in one-letter code: Nucleoside triphosphate pyrophosphatase (199 aa).

Catalysis depends on Asp-76, which acts as the Proton acceptor.

Belongs to the Maf family. A divalent metal cation is required as a cofactor.

Its subcellular location is the cytoplasm. It catalyses the reaction a ribonucleoside 5'-triphosphate + H2O = a ribonucleoside 5'-phosphate + diphosphate + H(+). The enzyme catalyses a 2'-deoxyribonucleoside 5'-triphosphate + H2O = a 2'-deoxyribonucleoside 5'-phosphate + diphosphate + H(+). Its function is as follows. Nucleoside triphosphate pyrophosphatase. May have a dual role in cell division arrest and in preventing the incorporation of modified nucleotides into cellular nucleic acids. The polypeptide is Nucleoside triphosphate pyrophosphatase (Caulobacter vibrioides (strain ATCC 19089 / CIP 103742 / CB 15) (Caulobacter crescentus)).